Consider the following 843-residue polypeptide: MPLSYQHFRKLLLLDDEAGPLEEELPRLADEGLNRRVAEDLNLGNPNVSIPWTHKVGNFTGLYSSTVPVFNPEWQTPSFPDIHLQEDIVDRCKQFVGPLTVNENRRLKLIMPARFYPNVTKYLPLDKGIKPYYPEHVVNHYFQARHYLHTLWKAGILYKRESTHSASFCGSPYSWEQDLQHGRLVFQTSKRHGDKSFCPQSPGILPRSSVGPCIQSQLRKSRLGPQPPQGQLAGRPQGGSGSIRARVHPSPWGTVGVEPSGSGHTHICASSSSSCLHQSAVRKAAYSLISTSKGHSSSGRAVELHHFPPNSSRSQSQGSVPSCWWLQFRNSKPCSEYCLCHIVNLIDDWGPCAEHGEHRIRTPRTPARVTGGVFLVDKNPHNTTESRLVVDFSQFSRGNTRVSWPKFAVPNLQSLTNLLSSNLSWLSLDVSAAFYHLPLHPAAMPHLLVGSSGLSRYVARLSSNSRIINHQHGTMQDLHNSCSRNLYVSLMLLYKTYGRKLHLYSHPIILGFRKIPMGVGLSPFLLAQFTSAICSVVRRAFPHCLAFSYMDDVVLGAKSVQHLESLYAAVTNFLVSLGIHVNPHKTKRWGYSLNFMGYVIGSWGTLPQEHIRQKIKLCFRKLPVNRPIDWKVCQRIVGLLGFAAPFTQCGYPALMPLYACISAKQAFTFSPTYKAFLSQQYLNLYPVARQRSGLCQVFADATPTGWGLAIGHQRMRGTFVSPLPIHTAELLAACFARSRSGAKLIGTDNSVVLSRKYTSFPWLLGCAANWILRGTSFVYVPSALNPADDPSRGRLGLYRPLLRLPYRPTTGRTSLYADSPSVPSHLPDRVHFASPLHVAWRPP.

The segment at 1–177 is terminal protein domain (TP); it reads MPLSYQHFRK…FCGSPYSWEQ (177 aa). Residues 178–346 form a spacer region; that stretch reads DLQHGRLVFQ…YCLCHIVNLI (169 aa). Disordered stretches follow at residues 220-258 and 292-319; these read KSRLGPQPPQGQLAGRPQGGSGSIRARVHPSPWGTVGVE and SKGHSSSGRAVELHHFPPNSSRSQSQGS. Low complexity predominate over residues 308-319; the sequence is PPNSSRSQSQGS. The segment at 347–690 is polymerase/reverse transcriptase domain (RT); that stretch reads DDWGPCAEHG…YLNLYPVARQ (344 aa). In terms of domain architecture, Reverse transcriptase spans 357–600; that stretch reads EHRIRTPRTP…YSLNFMGYVI (244 aa). Residues Asp-429, Asp-551, and Asp-552 each contribute to the Mg(2+) site.

The protein belongs to the hepadnaviridae P protein family.

It catalyses the reaction DNA(n) + a 2'-deoxyribonucleoside 5'-triphosphate = DNA(n+1) + diphosphate. It carries out the reaction Endonucleolytic cleavage to 5'-phosphomonoester.. Its activity is regulated as follows. Activated by host HSP70 and HSP40 in vitro to be able to bind the epsilon loop of the pgRNA. Because deletion of the RNase H region renders the protein partly chaperone-independent, the chaperones may be needed indirectly to relieve occlusion of the RNA-binding site by this domain. Inhibited by several reverse-transcriptase inhibitors: Lamivudine, Adefovir and Entecavir. Its function is as follows. Multifunctional enzyme that converts the viral RNA genome into dsDNA in viral cytoplasmic capsids. This enzyme displays a DNA polymerase activity that can copy either DNA or RNA templates, and a ribonuclease H (RNase H) activity that cleaves the RNA strand of RNA-DNA heteroduplexes in a partially processive 3'- to 5'-endonucleasic mode. Neo-synthesized pregenomic RNA (pgRNA) are encapsidated together with the P protein, and reverse-transcribed inside the nucleocapsid. Initiation of reverse-transcription occurs first by binding the epsilon loop on the pgRNA genome, and is initiated by protein priming, thereby the 5'-end of (-)DNA is covalently linked to P protein. Partial (+)DNA is synthesized from the (-)DNA template and generates the relaxed circular DNA (RC-DNA) genome. After budding and infection, the RC-DNA migrates in the nucleus, and is converted into a plasmid-like covalently closed circular DNA (cccDNA). The activity of P protein does not seem to be necessary for cccDNA generation, and is presumably released from (+)DNA by host nuclear DNA repair machinery. This Hepatitis B virus genotype B1 (isolate Japan/Yamagata-2/1998) (HBV-B) protein is Protein P.